The following is a 487-amino-acid chain: WAS/WASL-interacting protein family member 1 (487 aa).

Positions 1-14 (MPVPPPPAPPPPPT) are enriched in pro residues. Positions 1–487 (MPVPPPPAPP…GAPPLPPIPR (487 aa)) are disordered. A compositionally biased stretch (polar residues) spans 21–31 (EKPSLNKTEQA). The WH2 domain occupies 32 to 49 (GRNALLSDISKGKKLKKT). The residue at position 33 (Arg33) is an Asymmetric dimethylarginine. The segment at 45–48 (KLKK) is binds actin. A compositionally biased stretch (gly residues) spans 64 to 100 (GAGGGYGGGSGGGGGGGSSGGGGNFGGGGPPGLGGLF). Residues Arg121 and Arg130 each carry the omega-N-methylarginine modification. Residues 136 to 147 (PFSSPSGPGRFP) are compositionally biased toward low complexity. A Phosphoserine modification is found at Ser138. Composition is skewed to pro residues over residues 157–170 (PPEP…PPRP) and 178–190 (SLPP…PRPI). At Ser222 the chain carries Phosphoserine. Pro residues-rich tracts occupy residues 234-243 (FPRPPLPPTP), 269-285 (VPPP…PSTP), and 293-309 (APPP…PLPP). Ser324 carries the phosphoserine modification. A compositionally biased stretch (pro residues) spans 328–355 (PTPPLPSPGRSGPLPPPPTERPPPPVRD). Thr329 carries the post-translational modification Phosphothreonine. The residue at position 334 (Ser334) is a Phosphoserine. 3 XRSGPXPPXP motif repeats span residues 336 to 345 (GRSGPLPPPP), 358 to 367 (GRSGPLPPPP), and 394 to 403 (PRSGPRPPLP). The span at 397 to 418 (GPRPPLPPDRPGAGAPPPPPPS) shows a compositional bias: pro residues. Polar residues predominate over residues 419-428 (TSVRNGFQDS). Positions 464–478 (ARSESRSGSNRRERG) are enriched in basic and acidic residues.

The protein belongs to the verprolin family. Binds to WAS within the N-terminal region, at a site distinct from the CDC42-binding site. Binds profilin and actin. Interacts with DBNL. Binds to WASL. Interacts with DBNL. Interacts with FNBP1L (via the SH3 domain). Isoforms were differentially expressed. One isoform was ubiquitously expressed, another was muscle-specific and another was expressed in the liver, heart and testis.

The protein resides in the cytoplasmic vesicle. It is found in the cytoplasm. It localises to the cytoskeleton. Its subcellular location is the cell projection. The protein localises to the ruffle. Plays a role in the reorganization of the actin cytoskeleton. Contributes with NCK1 and GRB2 in the recruitment and activation of WASL. Plays a role in the formation of cell ruffles. May participate in regulating the subcellular localization of WASL, resulting in the disassembly of stress fibers in favor of filopodia formation. The polypeptide is WAS/WASL-interacting protein family member 1 (Wipf1) (Rattus norvegicus (Rat)).